The sequence spans 193 residues: Probable oligoribonuclease (193 aa).

In terms of domain architecture, Exonuclease spans 15-177; it reads IIWIDCEMTG…DDIMESIAEL (163 aa). Y136 is a catalytic residue.

It belongs to the oligoribonuclease family.

In terms of biological role, 3'-to-5' exoribonuclease specific for small oligoribonucleotides. This chain is Probable oligoribonuclease, found in Caenorhabditis elegans.